Consider the following 529-residue polypeptide: Serine hydroxymethyltransferase 3, chloroplastic (529 aa).

The transit peptide at 1–60 (MQACCGGNSMASLQQPGRVQGSVFPPIMPPVTKFSQQLKFNISKPFRSSFLKRNLVSEMR) directs the protein to the chloroplast. Residue K314 is modified to N6-(pyridoxal phosphate)lysine.

Belongs to the SHMT family. As to quaternary structure, homotetramer. Requires pyridoxal 5'-phosphate as cofactor.

The protein resides in the plastid. It localises to the chloroplast. It carries out the reaction (6R)-5,10-methylene-5,6,7,8-tetrahydrofolate + glycine + H2O = (6S)-5,6,7,8-tetrahydrofolate + L-serine. Its pathway is one-carbon metabolism; tetrahydrofolate interconversion. With respect to regulation, inhibited by 5-CH3-H4PteGlu1/5 and 5-HCO-H4PteGlu1/5 in vitro. Catalyzes the interconversion of serine and glycine and directs the hydroxymethyl moiety of serine into the metabolic network of H4PteGlu(n)-bound one-carbon units. In Arabidopsis thaliana (Mouse-ear cress), this protein is Serine hydroxymethyltransferase 3, chloroplastic.